A 132-amino-acid chain; its full sequence is Small ribosomal subunit protein uS8 (132 aa).

This sequence belongs to the universal ribosomal protein uS8 family. Part of the 30S ribosomal subunit. Contacts proteins S5 and S12.

Its function is as follows. One of the primary rRNA binding proteins, it binds directly to 16S rRNA central domain where it helps coordinate assembly of the platform of the 30S subunit. The protein is Small ribosomal subunit protein uS8 of Borrelia hermsii (strain HS1 / DAH).